The chain runs to 417 residues: Serine hydroxymethyltransferase (417 aa).

(6S)-5,6,7,8-tetrahydrofolate contacts are provided by residues Leu121 and 125–127; that span reads GHL. The residue at position 229 (Lys229) is an N6-(pyridoxal phosphate)lysine. 355 to 357 contributes to the (6S)-5,6,7,8-tetrahydrofolate binding site; it reads SPF.

Belongs to the SHMT family. In terms of assembly, homodimer. Pyridoxal 5'-phosphate serves as cofactor.

It is found in the cytoplasm. The enzyme catalyses (6R)-5,10-methylene-5,6,7,8-tetrahydrofolate + glycine + H2O = (6S)-5,6,7,8-tetrahydrofolate + L-serine. It functions in the pathway one-carbon metabolism; tetrahydrofolate interconversion. It participates in amino-acid biosynthesis; glycine biosynthesis; glycine from L-serine: step 1/1. Its function is as follows. Catalyzes the reversible interconversion of serine and glycine with tetrahydrofolate (THF) serving as the one-carbon carrier. This reaction serves as the major source of one-carbon groups required for the biosynthesis of purines, thymidylate, methionine, and other important biomolecules. Also exhibits THF-independent aldolase activity toward beta-hydroxyamino acids, producing glycine and aldehydes, via a retro-aldol mechanism. In Xylella fastidiosa (strain 9a5c), this protein is Serine hydroxymethyltransferase.